The following is a 246-amino-acid chain: 3'(2'),5'-bisphosphate nucleotidase CysQ (246 aa).

Mg(2+) contacts are provided by Glu64, Asp83, Leu85, Asp86, and Asp205. Residue Glu64 coordinates substrate. Residues 85–88 and Asp205 each bind substrate; that span reads LDGT.

It belongs to the inositol monophosphatase superfamily. CysQ family. Requires Mg(2+) as cofactor.

It is found in the cell inner membrane. It carries out the reaction adenosine 3',5'-bisphosphate + H2O = AMP + phosphate. Converts adenosine-3',5'-bisphosphate (PAP) to AMP. The chain is 3'(2'),5'-bisphosphate nucleotidase CysQ from Shigella flexneri.